The sequence spans 319 residues: Porphobilinogen deaminase 1 (319 aa).

Position 244 is an S-(dipyrrolylmethanemethyl)cysteine (C244).

It belongs to the HMBS family. In terms of assembly, monomer. Dipyrromethane serves as cofactor.

It carries out the reaction 4 porphobilinogen + H2O = hydroxymethylbilane + 4 NH4(+). Its pathway is porphyrin-containing compound metabolism; protoporphyrin-IX biosynthesis; coproporphyrinogen-III from 5-aminolevulinate: step 2/4. In terms of biological role, tetrapolymerization of the monopyrrole PBG into the hydroxymethylbilane pre-uroporphyrinogen in several discrete steps. The chain is Porphobilinogen deaminase 1 (hemC1) from Streptomyces coelicolor (strain ATCC BAA-471 / A3(2) / M145).